Here is a 1529-residue protein sequence, read N- to C-terminus: uncharacterized protein (1529 aa).

Over residues 1-11 the composition is skewed to low complexity; that stretch reads MDKNNNNNNSN. Disordered stretches follow at residues 1–85, 335–371, 660–694, 798–843, 1016–1035, 1334–1364, and 1454–1497; these read MDKN…SKGV, LLSN…WSSS, LPNL…TATA, NCNI…SSYS, SSLP…NTNN, QQQQ…QLQQ, and QQQV…SRLP. Positions 24–42 are enriched in polar residues; sequence QKRVQNPSFSSGQSRTVPS. The segment covering 51-79 has biased composition (low complexity); sequence ISSSSSSSSISTTNNTTTTTTSGTGSTSS. Over residues 810–833 the composition is skewed to low complexity; it reads NNNNNNNNNNNNNNNNNNNNNNNN. 2 stretches are compositionally biased toward polar residues: residues 834 to 843 and 1016 to 1027; these read VLPRSNSSYS and SSLPISQNLSDD. The span at 1454-1494 shows a compositional bias: low complexity; the sequence is QQQVQTPSSPQTLASLLGNSSSNTLTSSSSTLSLNESSTLS.

This is an uncharacterized protein from Dictyostelium discoideum (Social amoeba).